A 143-amino-acid polypeptide reads, in one-letter code: Ribonuclease P protein component 2 (143 aa).

The protein belongs to the eukaryotic/archaeal RNase P protein component 2 family. As to quaternary structure, consists of a catalytic RNA component and at least 4-5 protein subunits.

It localises to the cytoplasm. The catalysed reaction is Endonucleolytic cleavage of RNA, removing 5'-extranucleotides from tRNA precursor.. Functionally, part of ribonuclease P, a protein complex that generates mature tRNA molecules by cleaving their 5'-ends. This Saccharolobus islandicus (strain Y.N.15.51 / Yellowstone #2) (Sulfolobus islandicus) protein is Ribonuclease P protein component 2.